A 225-amino-acid polypeptide reads, in one-letter code: ATP-dependent dethiobiotin synthetase BioD (225 aa).

Residue 15–20 (EIGKTF) coordinates ATP. Thr19 serves as a coordination point for Mg(2+). Lys40 is a catalytic residue. Residues Asp57, 118–121 (EGVG), 178–179 (NR), and 207–209 (PHV) each bind ATP. Mg(2+) contacts are provided by Asp57 and Glu118.

This sequence belongs to the dethiobiotin synthetase family. In terms of assembly, homodimer. It depends on Mg(2+) as a cofactor.

It is found in the cytoplasm. It catalyses the reaction (7R,8S)-7,8-diammoniononanoate + CO2 + ATP = (4R,5S)-dethiobiotin + ADP + phosphate + 3 H(+). Its pathway is cofactor biosynthesis; biotin biosynthesis; biotin from 7,8-diaminononanoate: step 1/2. Catalyzes a mechanistically unusual reaction, the ATP-dependent insertion of CO2 between the N7 and N8 nitrogen atoms of 7,8-diaminopelargonic acid (DAPA, also called 7,8-diammoniononanoate) to form a ureido ring. The sequence is that of ATP-dependent dethiobiotin synthetase BioD from Aromatoleum aromaticum (strain DSM 19018 / LMG 30748 / EbN1) (Azoarcus sp. (strain EbN1)).